Reading from the N-terminus, the 525-residue chain is Cytochrome P450 monooxygenase bsc2 (525 aa).

Residues 12-32 (SLFILWLTTLLVSVLATAAYI) form a helical membrane-spanning segment. 2 N-linked (GlcNAc...) asparagine glycosylation sites follow: Asn86 and Asn317. Residue Cys456 participates in heme binding.

The protein belongs to the cytochrome P450 family. Requires heme as cofactor.

Its subcellular location is the membrane. It functions in the pathway mycotoxin biosynthesis. In terms of biological role, cytochrome P450 monooxygenase; part of the gene cluster that mediates the biosynthesis of the diterpene glucoside brassicicene C. In the first step of the brassicicene C biosynthesis, the bifunctional diterpene synthase bsc8 that possesses both prenyl transferase and terpene cyclase activity, converts isopentenyl diphosphate and dimethylallyl diphosphate into geranylgeranyl diphosphate (GGDP) that is further converted into fusicocca-2,10(14)-diene, the first precursor for brassicicene C. Fusicocca-2,10(14)-diene is then substrate of cytochrome P450 monooxygenase bsc1 for hydroxylation at the C-8 position. Oxidation at C-16 position to aldehyde is then catalyzed by the cytochrome P450 monooyxygenase bsc7, yielding fusicocca-2,10(14)-diene-8-beta,16-diol. Follows the isomerization of the double bond and reduction of aldehyde to alcohol catalyzed by the short-chain dehydrogenase/reductase bsc3 to yield the diol compound fusicocca-1,10(14)-diene-8 beta,16-diol. The next step is the oxidation at the C-3 position of fusicocca-2,10(14)-diene-8-beta,16-diol catalyzed by the alpha-ketoglutarate dependent dioxygenase bsc9, to produce a triol compound. Methylation of the hydroxy group at position 16 is performed by the methyltransferase bsc6. 16-O-methylation is followed by oxidation at the C-13 position to ketone and an alkyl shift of the methyl group leads to brassicicene C. Although the probable acetyltransferase bsc4 is included in the gene cluster, no acetylation reactions are necessary for brassicicene C biosynthesis. However, the fact that brassicicene E, which is a structurally related compound having an acetoxy group at position 12, was previously isolated from another strain of A.brassicicola suggests that the ATCC 96836 strain might also produce a small amount of brassicicene E. This is Cytochrome P450 monooxygenase bsc2 from Alternaria brassicicola (Dark leaf spot agent).